The following is a 93-amino-acid chain: Putative pterin-4-alpha-carbinolamine dehydratase (93 aa).

Belongs to the pterin-4-alpha-carbinolamine dehydratase family.

The enzyme catalyses (4aS,6R)-4a-hydroxy-L-erythro-5,6,7,8-tetrahydrobiopterin = (6R)-L-erythro-6,7-dihydrobiopterin + H2O. The polypeptide is Putative pterin-4-alpha-carbinolamine dehydratase (Chloroflexus aurantiacus (strain ATCC 29366 / DSM 635 / J-10-fl)).